Here is a 591-residue protein sequence, read N- to C-terminus: Protein phosphatase EYA1 (591 aa).

Disordered stretches follow at residues 1-95 (MEMQ…SYPH), 150-169 (GLSQ…GTSF), and 239-319 (MTSS…PDSD). Residues 8 to 23 (SPHSRLSGSSESPSGP) show a composition bias toward low complexity. Polar residues predominate over residues 28 to 53 (SHINSTSMTPNGTEVKTEPMSSSEIA). The span at 56 to 75 (AADGSLDSFSGSALGSSSFS) shows a compositional bias: low complexity. The span at 78-87 (PAHPFSPPQI) shows a compositional bias: pro residues. A compositionally biased stretch (low complexity) spans 240–252 (TSSNTSPTTPSTN). Positions 253 to 286 (ATYQLQEPPSGVTSQAVTDPTAEYSTIHSPSTPI) are enriched in polar residues. The segment covering 287-302 (KETDSERLRRGSDGKS) has biased composition (basic and acidic residues). Asp327 serves as the catalytic Nucleophile. Mg(2+)-binding residues include Asp327, Asp329, and Asp555. Asp329 (proton donor) is an active-site residue.

This sequence belongs to the HAD-like hydrolase superfamily. EYA family. In terms of assembly, probably interacts with SIX2, SIX4 and SIX5. Interacts with H2AX in response to DNA damage. Interacts with SIX3; promotes EYA1 translocation to the nucleus. It depends on Mg(2+) as a cofactor. Post-translationally, sumoylated with SUMO1. Extensively expressed in cranial placodes, branchial arches, CNS and developing eye and nose.

The protein resides in the cytoplasm. It localises to the nucleus. The catalysed reaction is O-phospho-L-tyrosyl-[protein] + H2O = L-tyrosyl-[protein] + phosphate. It carries out the reaction O-phospho-L-seryl-[protein] + H2O = L-seryl-[protein] + phosphate. The enzyme catalyses O-phospho-L-threonyl-[protein] + H2O = L-threonyl-[protein] + phosphate. In terms of biological role, functions both as protein phosphatase and as transcriptional coactivator for SIX1, and probably also for SIX2, SIX4 and SIX5. Tyrosine phosphatase that dephosphorylates 'Tyr-142' of histone H2AX (H2AXY142ph) and promotes efficient DNA repair via the recruitment of DNA repair complexes containing MDC1. 'Tyr-142' phosphorylation of histone H2AX plays a central role in DNA repair and acts as a mark that distinguishes between apoptotic and repair responses to genotoxic stress. Its function as histone phosphatase may contribute to its function in transcription regulation during organogenesis. Also has phosphatase activity with proteins phosphorylated on Ser and Thr residues (in vitro). Required for normal embryonic development of the craniofacial and trunk skeleton, kidneys and ears. Together with SIX1, it plays an important role in hypaxial muscle development; in this it is functionally redundant with EYA2. In Mus musculus (Mouse), this protein is Protein phosphatase EYA1 (Eya1).